A 411-amino-acid polypeptide reads, in one-letter code: uncharacterized protein (411 aa).

Disordered stretches follow at residues 1–91 and 253–280; these read METP…QDEE and KGPL…AYSP. Over residues 46-57 the composition is skewed to acidic residues; it reads ETTESADSENDM. Low complexity predominate over residues 74–86; it reads SNESFSSNQSTES. Basic and acidic residues predominate over residues 258 to 272; that stretch reads RRNEEDENKPQEKRP. The residue at position 279 (Ser279) is a Phosphoserine.

As to expression, widely expressed, highest levels in cerebellum, brain cortex, hippocampus, pons, putamen and amygdala. Highly expressed in neurons, but also present in glial cells. Slightly higher expression in the dorsolateral prefrontal cortex of schizophrenic patients compared to control individuals.

It localises to the cytoplasm. This is an uncharacterized protein from Homo sapiens (Human).